We begin with the raw amino-acid sequence, 567 residues long: Urease subunit alpha (567 aa).

The Urease domain maps to 129–567 (GGVDSHIHFI…LPLAQRYFLF (439 aa)). His-134, His-136, and Lys-217 together coordinate Ni(2+). Lys-217 is subject to N6-carboxylysine. A substrate-binding site is contributed by His-219. Residues His-246 and His-272 each coordinate Ni(2+). Residue His-320 is the Proton donor of the active site. Residue Asp-360 participates in Ni(2+) binding.

The protein belongs to the metallo-dependent hydrolases superfamily. Urease alpha subunit family. In terms of assembly, heterotrimer of UreA (gamma), UreB (beta) and UreC (alpha) subunits. Three heterotrimers associate to form the active enzyme. Requires Ni cation as cofactor. Post-translationally, carboxylation allows a single lysine to coordinate two nickel ions.

The protein localises to the cytoplasm. The enzyme catalyses urea + 2 H2O + H(+) = hydrogencarbonate + 2 NH4(+). It functions in the pathway nitrogen metabolism; urea degradation; CO(2) and NH(3) from urea (urease route): step 1/1. The polypeptide is Urease subunit alpha (Pseudomonas putida (strain ATCC 47054 / DSM 6125 / CFBP 8728 / NCIMB 11950 / KT2440)).